Reading from the N-terminus, the 177-residue chain is Ribosome maturation factor RimP (177 aa).

A compositionally biased stretch (basic and acidic residues) spans 153–171 (VEFNRKDTKNDNQTEHDNK). Residues 153–177 (VEFNRKDTKNDNQTEHDNKTEEEEA) are disordered.

The protein belongs to the RimP family.

The protein resides in the cytoplasm. Required for maturation of 30S ribosomal subunits. This chain is Ribosome maturation factor RimP, found in Streptomyces coelicolor (strain ATCC BAA-471 / A3(2) / M145).